A 488-amino-acid chain; its full sequence is ATP synthase subunit beta (488 aa).

155 to 162 lines the ATP pocket; the sequence is GGAGVGKT. The segment at 467 to 488 is disordered; sequence GFAPDDQNTDADEKPAAQAAAN.

It belongs to the ATPase alpha/beta chains family. In terms of assembly, F-type ATPases have 2 components, CF(1) - the catalytic core - and CF(0) - the membrane proton channel. CF(1) has five subunits: alpha(3), beta(3), gamma(1), delta(1), epsilon(1). CF(0) has three main subunits: a(1), b(2) and c(9-12). The alpha and beta chains form an alternating ring which encloses part of the gamma chain. CF(1) is attached to CF(0) by a central stalk formed by the gamma and epsilon chains, while a peripheral stalk is formed by the delta and b chains.

Its subcellular location is the cell membrane. It catalyses the reaction ATP + H2O + 4 H(+)(in) = ADP + phosphate + 5 H(+)(out). Its function is as follows. Produces ATP from ADP in the presence of a proton gradient across the membrane. The catalytic sites are hosted primarily by the beta subunits. The chain is ATP synthase subunit beta from Lacticaseibacillus casei (strain BL23) (Lactobacillus casei).